The following is a 181-amino-acid chain: Inner membrane-spanning protein YciB (181 aa).

Helical transmembrane passes span 10 to 30 (LVIFFAVYKFFDIYIASGALI), 50 to 70 (MHLITFAMVTVFGTLTLVFHD), 80 to 100 (IIYSLFAIALGVSQLLNKSIL), 118 to 138 (VTWYWVVFFASCGLVNIYVAF), and 148 to 168 (FKVFGLTALTLINTVLTVFYL).

This sequence belongs to the YciB family.

The protein localises to the cell inner membrane. Functionally, plays a role in cell envelope biogenesis, maintenance of cell envelope integrity and membrane homeostasis. This is Inner membrane-spanning protein YciB from Shewanella baltica (strain OS223).